Here is a 291-residue protein sequence, read N- to C-terminus: Feruloyl esterase B (291 aa).

Positions 1-18 are cleaved as a signal peptide; that stretch reads MLVRSFLGFAVLAATCLA. The N-linked (GlcNAc...) asparagine glycan is linked to asparagine 117. Serine 136 serves as the catalytic Charge relay system. The N-linked (GlcNAc...) asparagine glycan is linked to asparagine 179.

It belongs to the carbohydrate esterase 1 (CE1) family. Feruloyl esterase type B subfamily.

Its subcellular location is the secreted. The enzyme catalyses feruloyl-polysaccharide + H2O = ferulate + polysaccharide.. Its function is as follows. Feruloyl esterase which acts in synergy with xylanases in degradation of plant cell walls. Hydrolyzes the ester linkage of hydroxycinnamic acids (ferulic acid (FA) and p-coumaric acid) and diferulates present in plant cell walls. Is active on substrates containing ferulic acid ester linked to the C-5 and C-2 linkages of arabinofuranose, while it was found capable of de-esterifying acetylated glucuronoxylans. Efficiently releases ferulic acid (FA) from destarched wheat bran when incubated with an M3 xylanase. In Thermothelomyces thermophilus (strain ATCC 42464 / BCRC 31852 / DSM 1799) (Sporotrichum thermophile), this protein is Feruloyl esterase B (Fae1a).